The chain runs to 91 residues: Ribonuclease P protein component 4 (91 aa).

4 residues coordinate Zn(2+): Cys55, Cys58, Cys78, and Cys81.

This sequence belongs to the eukaryotic/archaeal RNase P protein component 4 family. Consists of a catalytic RNA component and at least 4-5 protein subunits. It depends on Zn(2+) as a cofactor.

Its subcellular location is the cytoplasm. The enzyme catalyses Endonucleolytic cleavage of RNA, removing 5'-extranucleotides from tRNA precursor.. Part of ribonuclease P, a protein complex that generates mature tRNA molecules by cleaving their 5'-ends. The protein is Ribonuclease P protein component 4 of Thermoplasma acidophilum (strain ATCC 25905 / DSM 1728 / JCM 9062 / NBRC 15155 / AMRC-C165).